Consider the following 196-residue polypeptide: Ribonuclease HII (196 aa).

The 188-residue stretch at 9-196 (SLIAGVDEVG…APVKRAIGLK (188 aa)) folds into the RNase H type-2 domain. A divalent metal cation contacts are provided by aspartate 15, glutamate 16, and aspartate 107.

This sequence belongs to the RNase HII family. Requires Mn(2+) as cofactor. Mg(2+) serves as cofactor.

The protein localises to the cytoplasm. It carries out the reaction Endonucleolytic cleavage to 5'-phosphomonoester.. Endonuclease that specifically degrades the RNA of RNA-DNA hybrids. This is Ribonuclease HII from Photorhabdus laumondii subsp. laumondii (strain DSM 15139 / CIP 105565 / TT01) (Photorhabdus luminescens subsp. laumondii).